A 63-amino-acid chain; its full sequence is Large ribosomal subunit protein bL28 (63 aa).

The protein belongs to the bacterial ribosomal protein bL28 family.

The polypeptide is Large ribosomal subunit protein bL28 (Heliobacterium modesticaldum (strain ATCC 51547 / Ice1)).